Reading from the N-terminus, the 680-residue chain is Lipase 1 (680 aa).

Positions 1-34 are cleaved as a signal peptide; it reads MKSQNKYSIRKFSVGASSILIATLLFLSGGQAQA. Positions 35–290 are excised as a propeptide; the sequence is AEKQVNMGNS…AKAKDDQTNK (256 aa). Positions 82 to 259 are disordered; sequence KNLHNDKTIS…PTKDNDKKNG (178 aa). Over residues 84-112 the composition is skewed to basic and acidic residues; sequence LHNDKTISEENHRKTDDLNKDQLKDDKKS. The segment covering 125–138 has biased composition (polar residues); it reads KNNNANPSDVNQGL. Residues 148-170 show a composition bias toward low complexity; it reads SKVASQQQSKEADNSQDSNANNN. The segment covering 204 to 223 has biased composition (polar residues); it reads QPQQNNQANDKITNYNFNNE. A compositionally biased stretch (basic and acidic residues) spans 224 to 234; the sequence is QEVKPQKDEKT. The segment covering 235–246 has biased composition (polar residues); it reads LSVSDLKNNQKS. Catalysis depends on S408, which acts as the Nucleophile. Catalysis depends on D600, which acts as the Charge relay system. Residue D638 participates in Ca(2+) binding. Residue H639 is the Charge relay system of the active site. Ca(2+)-binding residues include D641, D646, and D649.

This sequence belongs to the AB hydrolase superfamily. Lipase family.

It is found in the secreted. The catalysed reaction is a triacylglycerol + H2O = a diacylglycerol + a fatty acid + H(+). The polypeptide is Lipase 1 (lip1) (Staphylococcus aureus (strain MSSA476)).